A 115-amino-acid chain; its full sequence is Pro-neuregulin-4, membrane-bound isoform (115 aa).

The Extracellular portion of the chain corresponds to 1 to 62 (MPTDHEQPCG…SSIPSESNLS (62 aa)). The EGF-like domain occupies 5 to 46 (HEQPCGPRHRSFCLNGGICYVIPTIPSPFCRCIENYTGARCE). 3 cysteine pairs are disulfide-bonded: Cys-9–Cys-23, Cys-17–Cys-34, and Cys-36–Cys-45. Residues Asn-39 and Asn-60 are each glycosylated (N-linked (GlcNAc...) asparagine). A helical membrane pass occupies residues 63–83 (AAFVVLAVLLTLTIAALCFLC). The Cytoplasmic segment spans residues 84–115 (RKGHLQRASSVQCEISLVETNNTRTRHSHREH).

The protein belongs to the neuregulin family. As to quaternary structure, interacts with ERBB4. In terms of processing, proteolytic cleavage close to the plasma membrane on the external face leads to the release of the soluble growth factor form. Post-translationally, extensive glycosylation precedes the proteolytic cleavage. As to expression, highly expressed in pancreas; weakly expressed in muscle.

It is found in the cell membrane. Its subcellular location is the secreted. Low affinity ligand for the ERBB4 tyrosine kinase receptor. Concomitantly recruits ERBB1 and ERBB2 coreceptors, resulting in ligand-stimulated tyrosine phosphorylation and activation of the ERBB receptors. Does not bind to the ERBB1, ERBB2 and ERBB3 receptors. The protein is Pro-neuregulin-4, membrane-bound isoform (Nrg4) of Mus musculus (Mouse).